A 134-amino-acid polypeptide reads, in one-letter code: Probable glycine cleavage system H protein (134 aa).

The 82-residue stretch at Thr29–Lys110 folds into the Lipoyl-binding domain. Lys70 is subject to N6-lipoyllysine.

It belongs to the GcvH family. In terms of assembly, the glycine cleavage system is composed of four proteins: P, T, L and H. (R)-lipoate serves as cofactor.

Functionally, the glycine cleavage system catalyzes the degradation of glycine. The H protein shuttles the methylamine group of glycine from the P protein to the T protein. The polypeptide is Probable glycine cleavage system H protein (Pyrococcus horikoshii (strain ATCC 700860 / DSM 12428 / JCM 9974 / NBRC 100139 / OT-3)).